Reading from the N-terminus, the 209-residue chain is Ribulose-phosphate 3-epimerase (209 aa).

Ser8 contributes to the substrate binding site. A divalent metal cation-binding residues include His33, Asp35, His64, and Asp170. Residue Asp35 is the Proton acceptor of the active site. Substrate-binding positions include His64, 170–172 (DGG), and 191–192 (GS). The Proton donor role is filled by Asp170.

This sequence belongs to the ribulose-phosphate 3-epimerase family. A divalent metal cation serves as cofactor.

It carries out the reaction D-ribulose 5-phosphate = D-xylulose 5-phosphate. It functions in the pathway carbohydrate degradation. Catalyzes the reversible epimerization of D-ribulose 5-phosphate to D-xylulose 5-phosphate. In Mycoplasma genitalium (strain ATCC 33530 / DSM 19775 / NCTC 10195 / G37) (Mycoplasmoides genitalium), this protein is Ribulose-phosphate 3-epimerase.